Reading from the N-terminus, the 352-residue chain is Pyruvate dehydrogenase E1 component subunit beta, mitochondrial (352 aa).

Residues methionine 1–alanine 21 constitute a mitochondrion transit peptide. Glutamate 81 is a binding site for thiamine diphosphate. Residues isoleucine 134, alanine 182, isoleucine 183, aspartate 185, and asparagine 187 each contribute to the K(+) site.

In terms of assembly, tetramer of 2 alpha and 2 beta subunits. Thiamine diphosphate serves as cofactor.

The protein resides in the mitochondrion matrix. The enzyme catalyses N(6)-[(R)-lipoyl]-L-lysyl-[protein] + pyruvate + H(+) = N(6)-[(R)-S(8)-acetyldihydrolipoyl]-L-lysyl-[protein] + CO2. The pyruvate dehydrogenase complex catalyzes the overall conversion of pyruvate to acetyl-CoA and CO(2). It contains multiple copies of three enzymatic components: pyruvate dehydrogenase (E1), dihydrolipoamide acetyltransferase (E2) and lipoamide dehydrogenase (E3). This Caenorhabditis elegans protein is Pyruvate dehydrogenase E1 component subunit beta, mitochondrial (pdhb-1).